A 135-amino-acid chain; its full sequence is Large ribosomal subunit protein uL16c (135 aa).

The protein belongs to the universal ribosomal protein uL16 family. Part of the 50S ribosomal subunit.

The protein localises to the plastid. Its subcellular location is the chloroplast. This chain is Large ribosomal subunit protein uL16c, found in Nymphaea alba (White water-lily).